Consider the following 503-residue polypeptide: GMP synthase [glutamine-hydrolyzing] (503 aa).

The region spanning 3 to 189 (PVLVVDFGSQ…AFLSSFAAPN (187 aa)) is the Glutamine amidotransferase type-1 domain. Residue Cys80 is the Nucleophile of the active site. Catalysis depends on residues His165 and Glu167. Positions 190 to 380 (WDPEQTICGT…LGIPKHIVHR (191 aa)) constitute a GMPS ATP-PPase domain. Residue 217–223 (SGGVDSV) participates in ATP binding.

As to quaternary structure, homodimer.

The enzyme catalyses XMP + L-glutamine + ATP + H2O = GMP + L-glutamate + AMP + diphosphate + 2 H(+). Its pathway is purine metabolism; GMP biosynthesis; GMP from XMP (L-Gln route): step 1/1. Catalyzes the synthesis of GMP from XMP. In Tropheryma whipplei (strain TW08/27) (Whipple's bacillus), this protein is GMP synthase [glutamine-hydrolyzing].